The primary structure comprises 245 residues: tRNA pseudouridine synthase A (245 aa).

Asp-52 serves as the catalytic Nucleophile. Position 111 (Tyr-111) interacts with substrate.

It belongs to the tRNA pseudouridine synthase TruA family. As to quaternary structure, homodimer.

It catalyses the reaction uridine(38/39/40) in tRNA = pseudouridine(38/39/40) in tRNA. In terms of biological role, formation of pseudouridine at positions 38, 39 and 40 in the anticodon stem and loop of transfer RNAs. In Rickettsia canadensis (strain McKiel), this protein is tRNA pseudouridine synthase A.